The chain runs to 71 residues: Large ribosomal subunit protein bL31 (71 aa).

Zn(2+) contacts are provided by cysteine 16, cysteine 18, cysteine 37, and cysteine 40.

This sequence belongs to the bacterial ribosomal protein bL31 family. Type A subfamily. As to quaternary structure, part of the 50S ribosomal subunit. It depends on Zn(2+) as a cofactor.

In terms of biological role, binds the 23S rRNA. The polypeptide is Large ribosomal subunit protein bL31 (Chromohalobacter salexigens (strain ATCC BAA-138 / DSM 3043 / CIP 106854 / NCIMB 13768 / 1H11)).